We begin with the raw amino-acid sequence, 399 residues long: S-adenosylmethionine synthase (399 aa).

ATP is bound at residue 135-140; the sequence is GEGSTD.

Belongs to the AdoMet synthase 2 family. The cofactor is Mg(2+).

It catalyses the reaction L-methionine + ATP + H2O = S-adenosyl-L-methionine + phosphate + diphosphate. It functions in the pathway amino-acid biosynthesis; S-adenosyl-L-methionine biosynthesis; S-adenosyl-L-methionine from L-methionine: step 1/1. In terms of biological role, catalyzes the formation of S-adenosylmethionine from methionine and ATP. In Archaeoglobus fulgidus (strain ATCC 49558 / DSM 4304 / JCM 9628 / NBRC 100126 / VC-16), this protein is S-adenosylmethionine synthase (mat).